An 88-amino-acid chain; its full sequence is uncharacterized protein (88 aa).

A run of 3 helical transmembrane segments spans residues 3–23 (VFILFYLWIVPIVIGILCSVA), 33–53 (VAPGIAMIVLSIISLITAFTA), and 61–81 (FIGGMFLFGTFLVGSAFPFFF).

It localises to the cell membrane. This is an uncharacterized protein from Bacillus subtilis (strain 168).